The sequence spans 394 residues: Ribose-phosphate pyrophosphokinase 5, chloroplastic (394 aa).

The transit peptide at 1 to 33 (MASIVQPSPTFPALNLRRSSLIRPPSSVRFPLK) directs the protein to the chloroplast. Positions 202, 204, 213, and 217 each coordinate Mg(2+). The segment at 288-303 (GKVAIMVDDMIDTAGT) is binding of phosphoribosylpyrophosphate.

It belongs to the ribose-phosphate pyrophosphokinase family.

Its subcellular location is the plastid. The protein localises to the chloroplast. The enzyme catalyses D-ribose 5-phosphate + ATP = 5-phospho-alpha-D-ribose 1-diphosphate + AMP + H(+). The polypeptide is Ribose-phosphate pyrophosphokinase 5, chloroplastic (PRS5) (Arabidopsis thaliana (Mouse-ear cress)).